Reading from the N-terminus, the 130-residue chain is Small ribosomal subunit protein uS9 (130 aa).

Belongs to the universal ribosomal protein uS9 family.

In Saccharophagus degradans (strain 2-40 / ATCC 43961 / DSM 17024), this protein is Small ribosomal subunit protein uS9.